Consider the following 409-residue polypeptide: Arginine deiminase (409 aa).

Cys-399 functions as the Amidino-cysteine intermediate in the catalytic mechanism.

Belongs to the arginine deiminase family.

Its subcellular location is the cytoplasm. It carries out the reaction L-arginine + H2O = L-citrulline + NH4(+). It functions in the pathway amino-acid degradation; L-arginine degradation via ADI pathway; carbamoyl phosphate from L-arginine: step 1/2. The protein is Arginine deiminase (arcA) of Borreliella afzelii (Borrelia afzelii).